The sequence spans 237 residues: Sugar fermentation stimulation protein homolog (237 aa).

Belongs to the SfsA family.

The sequence is that of Sugar fermentation stimulation protein homolog from Azorhizobium caulinodans (strain ATCC 43989 / DSM 5975 / JCM 20966 / LMG 6465 / NBRC 14845 / NCIMB 13405 / ORS 571).